The primary structure comprises 255 residues: Hemin import ATP-binding protein HmuV (255 aa).

Positions 2–238 (LQVEGLYLCR…AALKAVYGID (237 aa)) constitute an ABC transporter domain. Residue 34–41 (GPNGAGKS) participates in ATP binding.

It belongs to the ABC transporter superfamily. Heme (hemin) importer (TC 3.A.1.14.5) family. As to quaternary structure, the complex is composed of two ATP-binding proteins (HmuV), two transmembrane proteins (HmuU) and a solute-binding protein (HmuT).

The protein localises to the cell inner membrane. In terms of biological role, part of the ABC transporter complex HmuTUV involved in hemin import. Responsible for energy coupling to the transport system. The chain is Hemin import ATP-binding protein HmuV from Pseudomonas putida (strain ATCC 47054 / DSM 6125 / CFBP 8728 / NCIMB 11950 / KT2440).